The following is a 184-amino-acid chain: Photosystem I assembly protein Ycf4 (184 aa).

2 helical membrane-spanning segments follow: residues 22–42 (FCWA…GIPS) and 64–84 (IVMC…WCTI).

The protein belongs to the Ycf4 family.

It localises to the plastid. The protein localises to the chloroplast thylakoid membrane. In terms of biological role, seems to be required for the assembly of the photosystem I complex. The sequence is that of Photosystem I assembly protein Ycf4 from Huperzia lucidula (Shining clubmoss).